Reading from the N-terminus, the 124-residue chain is Fluoride-specific ion channel FluC 2 (124 aa).

4 helical membrane-spanning segments follow: residues 1-21 (MNFL…YAIT), 36-58 (SNLP…FIFG), 63-85 (VFIY…TMNT), and 104-124 (LSSY…AILF). Na(+)-binding residues include Gly75 and Thr78.

The protein belongs to the fluoride channel Fluc/FEX (TC 1.A.43) family. In terms of assembly, heterodimer composed of FluC1 and FluC2. Neither FluC1 nor FluC2 alone catalyzes fluoride efflux from liposomes.

It is found in the cell membrane. It catalyses the reaction fluoride(in) = fluoride(out). With respect to regulation, na(+) is not transported, but it plays an essential structural role and its presence is essential for fluoride channel function. Fluoride-specific ion channel. Important for reducing fluoride concentration in the cell, thus reducing its toxicity. This Lactobacillus acidophilus (strain ATCC 700396 / NCK56 / N2 / NCFM) protein is Fluoride-specific ion channel FluC 2.